The sequence spans 463 residues: L-seryl-tRNA(Sec) selenium transferase (463 aa).

Position 295 is an N6-(pyridoxal phosphate)lysine (lysine 295).

Belongs to the SelA family. In terms of assembly, homodecamer; pentamer of dimers. Binds only one seryl-tRNA(Sec) per dimer. The cofactor is pyridoxal 5'-phosphate.

The protein localises to the cytoplasm. It catalyses the reaction L-seryl-tRNA(Sec) + selenophosphate + H(+) = L-selenocysteinyl-tRNA(Sec) + phosphate. It functions in the pathway aminoacyl-tRNA biosynthesis; selenocysteinyl-tRNA(Sec) biosynthesis; selenocysteinyl-tRNA(Sec) from L-seryl-tRNA(Sec) (bacterial route): step 1/1. In terms of biological role, converts seryl-tRNA(Sec) to selenocysteinyl-tRNA(Sec) required for selenoprotein biosynthesis. This is L-seryl-tRNA(Sec) selenium transferase from Escherichia coli (strain SMS-3-5 / SECEC).